The following is a 130-amino-acid chain: UPF0212 protein PF1486 (130 aa).

It belongs to the UPF0212 family.

The sequence is that of UPF0212 protein PF1486 from Pyrococcus furiosus (strain ATCC 43587 / DSM 3638 / JCM 8422 / Vc1).